Reading from the N-terminus, the 467-residue chain is MNQQDIEQVVKAVLLKMKDSSQPASTVHEMGVFASLDDAVAAAKRAQQGLKSVAMRQLAIHAIREAGEKHARELAELAVSETGMGRVDDKFAKNVAQARGTPGVECLSPQVLTGDNGLTLIENAPWGVVASVTPSTNPAATVINNAISLIAAGNSVVFAPHPAAKKVSQRAITLLNQAVVAAGGPENLLVTVANPDIETAQRLFKYPGIGLLVVTGGEAVVDAARKHTNKRLIAAGAGNPPVVVDETADLPRAAQSIVKGASFDNNIICADEKVLIVVDSVADELMRLMEGQHAVKLTAAQAEQLQPVLLKNIDERGKGTVSRDWVGRDAGKIAAAIGLNVPDQTRLLFVETPANHPFAVTEMMMPVLPVVRVANVEEAIALAVQLEGGCHHTAAMHSRNIDNMNQMANAIDTSIFVKNGPCIAGLGLGGEGWTTMTITTPTGEGVTSARTFVRLRRCVLVDAFRIV.

Positions 1–19 (MNQQDIEQVVKAVLLKMKD) are targets protein to the BMC.

The protein belongs to the EutE/PduP family. Interacts with EutS, which targets it to the interior of the BMC.

It is found in the bacterial microcompartment. The enzyme catalyses acetaldehyde + NAD(+) + CoA = acetyl-CoA + NADH + H(+). Its pathway is amine and polyamine degradation; ethanolamine degradation. Functionally, acts as the second step in ethanolamine degradation by converting acetaldehyde into acetyl-CoA. Has a very strong preference for NAD(+) over NADP(+) in both catalytic directions. May play a role in bacterial microcompartment (BMC) assembly or maintenance. Directly targeted to the BMC. Its function is as follows. Expression of the eut operon allows this bacteria to use ethanolamine (EA) as a carbon, nitrogen and energy source. It relies on cobalamin (vitamin B12) both as a cofactor for the ethanolamine ammonia-lyase (EAL) activity and to induce the operon. EA enhances bacterial survival in macrophages in a concentration-dependent manner, suggesting it is an important nutrient during infection. The polypeptide is Acetaldehyde dehydrogenase (acetylating) EutE (Salmonella typhimurium (strain LT2 / SGSC1412 / ATCC 700720)).